The following is a 455-amino-acid chain: tRNA-2-methylthio-N(6)-dimethylallyladenosine synthase (455 aa).

The region spanning 3 to 117 is the MTTase N-terminal domain; sequence KGLYIESYGC…LPELIMKATR (115 aa). Residues C12, C48, C80, C155, C159, and C162 each coordinate [4Fe-4S] cluster. One can recognise a Radical SAM core domain in the interval 141–375; the sequence is VSRGVSAFVS…LLTQQRLFTK (235 aa).

Belongs to the methylthiotransferase family. MiaB subfamily. As to quaternary structure, monomer. [4Fe-4S] cluster is required as a cofactor.

It is found in the cytoplasm. It catalyses the reaction N(6)-dimethylallyladenosine(37) in tRNA + (sulfur carrier)-SH + AH2 + 2 S-adenosyl-L-methionine = 2-methylsulfanyl-N(6)-dimethylallyladenosine(37) in tRNA + (sulfur carrier)-H + 5'-deoxyadenosine + L-methionine + A + S-adenosyl-L-homocysteine + 2 H(+). Functionally, catalyzes the methylthiolation of N6-(dimethylallyl)adenosine (i(6)A), leading to the formation of 2-methylthio-N6-(dimethylallyl)adenosine (ms(2)i(6)A) at position 37 in tRNAs that read codons beginning with uridine. The chain is tRNA-2-methylthio-N(6)-dimethylallyladenosine synthase from Anaplasma marginale (strain St. Maries).